Consider the following 160-residue polypeptide: 3-hydroxyacyl-[acyl-carrier-protein] dehydratase FabZ (160 aa).

Residue His-60 is part of the active site.

The protein belongs to the thioester dehydratase family. FabZ subfamily.

The protein resides in the cytoplasm. The catalysed reaction is a (3R)-hydroxyacyl-[ACP] = a (2E)-enoyl-[ACP] + H2O. Functionally, involved in unsaturated fatty acids biosynthesis. Catalyzes the dehydration of short chain beta-hydroxyacyl-ACPs and long chain saturated and unsaturated beta-hydroxyacyl-ACPs. This Rhodospirillum rubrum (strain ATCC 11170 / ATH 1.1.1 / DSM 467 / LMG 4362 / NCIMB 8255 / S1) protein is 3-hydroxyacyl-[acyl-carrier-protein] dehydratase FabZ.